Reading from the N-terminus, the 433-residue chain is Enolase (433 aa).

A (2R)-2-phosphoglycerate-binding site is contributed by glutamine 167. Glutamate 209 serves as the catalytic Proton donor. Mg(2+) is bound by residues aspartate 246, glutamate 291, and aspartate 318. The (2R)-2-phosphoglycerate site is built by lysine 343, arginine 372, serine 373, and lysine 394. The active-site Proton acceptor is lysine 343.

This sequence belongs to the enolase family. In terms of assembly, component of the RNA degradosome, a multiprotein complex involved in RNA processing and mRNA degradation. Mg(2+) serves as cofactor.

The protein localises to the cytoplasm. Its subcellular location is the secreted. The protein resides in the cell surface. The catalysed reaction is (2R)-2-phosphoglycerate = phosphoenolpyruvate + H2O. Its pathway is carbohydrate degradation; glycolysis; pyruvate from D-glyceraldehyde 3-phosphate: step 4/5. Functionally, catalyzes the reversible conversion of 2-phosphoglycerate (2-PG) into phosphoenolpyruvate (PEP). It is essential for the degradation of carbohydrates via glycolysis. This Aeromonas salmonicida (strain A449) protein is Enolase.